The chain runs to 324 residues: Phospho-N-acetylmuramoyl-pentapeptide-transferase (324 aa).

10 consecutive transmembrane segments (helical) span residues 5–25 (GLLV…PLFI), 52–72 (PTMG…IMAI), 77–97 (LGAE…IGFL), 117–137 (LLGQ…QGFD), 147–167 (ITFD…IGGS), 176–196 (LDGL…IIAV), 202–222 (AVAI…VFNA), 227–247 (VFMG…VAIL), 253–273 (LLVI…IQVI), and 302–322 (VVVT…YIGV).

The protein belongs to the glycosyltransferase 4 family. MraY subfamily. It depends on Mg(2+) as a cofactor.

The protein resides in the cell membrane. The catalysed reaction is UDP-N-acetyl-alpha-D-muramoyl-L-alanyl-gamma-D-glutamyl-meso-2,6-diaminopimeloyl-D-alanyl-D-alanine + di-trans,octa-cis-undecaprenyl phosphate = di-trans,octa-cis-undecaprenyl diphospho-N-acetyl-alpha-D-muramoyl-L-alanyl-D-glutamyl-meso-2,6-diaminopimeloyl-D-alanyl-D-alanine + UMP. It participates in cell wall biogenesis; peptidoglycan biosynthesis. Functionally, catalyzes the initial step of the lipid cycle reactions in the biosynthesis of the cell wall peptidoglycan: transfers peptidoglycan precursor phospho-MurNAc-pentapeptide from UDP-MurNAc-pentapeptide onto the lipid carrier undecaprenyl phosphate, yielding undecaprenyl-pyrophosphoryl-MurNAc-pentapeptide, known as lipid I. This chain is Phospho-N-acetylmuramoyl-pentapeptide-transferase, found in Bacillus cytotoxicus (strain DSM 22905 / CIP 110041 / 391-98 / NVH 391-98).